The sequence spans 70 residues: MKKGIHPNYAEVTAKCSCGNEIKTRSTVGHDLNLDVCGNCHPFYTGKQRDVASGGRVDRFNKRFSIPGSK.

Residues Cys-16, Cys-18, Cys-37, and Cys-40 each coordinate Zn(2+).

The protein belongs to the bacterial ribosomal protein bL31 family. Type A subfamily. In terms of assembly, part of the 50S ribosomal subunit. It depends on Zn(2+) as a cofactor.

Functionally, binds the 23S rRNA. This is Large ribosomal subunit protein bL31 from Erwinia tasmaniensis (strain DSM 17950 / CFBP 7177 / CIP 109463 / NCPPB 4357 / Et1/99).